We begin with the raw amino-acid sequence, 109 residues long: Archaeosine synthase (109 aa).

Cysteine 21 serves as the catalytic Thioimide intermediate. The Proton donor/acceptor role is filled by aspartate 28. Substrate-binding positions include aspartate 28, 43 to 46, and 62 to 63; these read LAIE and HE.

It belongs to the archaeosine synthase type 2 family. As to quaternary structure, forms a symmetric tunnel-fold (T-fold) homodecamer of two head-to-head facing pentameric subunits, with 10 active sites at the intermonomer interfaces.

The catalysed reaction is 7-cyano-7-carbaguanosine(15) in tRNA + NH4(+) = archaeosine(15) in tRNA. It participates in tRNA modification; archaeosine-tRNA biosynthesis. In terms of biological role, is responsible for the final step in the biosynthesis of archaeosine, a modified nucleoside present in the dihydrouridine loop (D-loop) of archaeal tRNA. Catalyzes the conversion of 7-cyano-7-deazaguanine (preQ0)-modified tRNA to archaeosine-tRNA, transforming a nitrile group to a formamidine group. Can use neither glutamine nor asparagine as amino donor in vitro, is only able to utilize free ammonium. However, the enzyme might function in vivo with a partner that serves to generate ammonium. This chain is Archaeosine synthase, found in Pyrobaculum calidifontis (strain DSM 21063 / JCM 11548 / VA1).